The sequence spans 953 residues: MSDYKHTLNLPETEFPMRGDLAKREPNMLKRWYDQDLYGAIRRAKAGKPSFILHDGPPYANGSIHIGHSVNKILKDVIIKSKGLSGFDSPYVPGWDCHGLPIELKVEGMVGKPGEKVSAAEFRAECRKYAKTQIEAQKTDFIRLGVLGDWEHPYLTMDFGTEANIIRSMAKIVENGHLHKGSKPVHWCTDCGSALAEAEVEYYDKNSPSIDVRFKAVDEATVAAKFDCPEGHLGKGPISAVIWTTTPWTLPANRAIAMHADLDYALVQVEGEHPERLILAAELVKDVMDRAGIEKFHNLGYTKGVALELLRFNHPFYSFDVPVVLGDHVTLDAGTGAVHTAPGHGQEDFVVGQKYGLEVANPVGSNGVYLPDTELFAGQHVFKANAAVVEVLTERGALLHHMVFNHSYPHCWRHKTPIIFRATPQWFISMEQKGLRQRALEEIERIEKDGITQHGQSGWVPAWGKNRIQAMVENRPDWCISRQRTWGVPISLFVHKETQQLHPESVRLMHEVAKRVEQSGIQAWWDLDKAELLGSDADMYDKVPDTLDVWFDSGSTHSSVVDARPEFNGHSADLYLEGSDQHRGWFMSSLMIGVAMKDKAPYNQVLTHGFTVDGQGRKMSKSIGNVVSPQDVMNKLGADILRLWVASTDYTGEMTVSDEILKRSADAYRRIRNTARFLLANLNGFNPATDMVAAADMVVVDRWAVGRAKAAQAEIVTAFEEYNFHGVTQKLMQFCSIEMGSFYLDVIKDRQYTAKADSLARRSCQTALYHIAQAMVRWMAPIMSFTADEIWALLPGERSEFVFTEEWYDGLFGLDAGEQMDDAFWAEILTVRGEVNKALEAARGEKRIGGSLQAELTLFAKPELAERLNALADELRFVLLTSKAKVVTADTAPEGSVATERADLWLSVAQSAAAKCDRCWHHVEDVGTIAGHEEICGRCATNVEGDGETRQFA.

Positions 58–68 match the 'HIGH' region motif; that stretch reads PYANGSIHIGH. Glu-577 lines the L-isoleucyl-5'-AMP pocket. Residues 618–622 carry the 'KMSKS' region motif; that stretch reads KMSKS. Lys-621 serves as a coordination point for ATP. 4 residues coordinate Zn(2+): Cys-916, Cys-919, Cys-936, and Cys-939.

This sequence belongs to the class-I aminoacyl-tRNA synthetase family. IleS type 1 subfamily. Monomer. Requires Zn(2+) as cofactor.

It localises to the cytoplasm. The enzyme catalyses tRNA(Ile) + L-isoleucine + ATP = L-isoleucyl-tRNA(Ile) + AMP + diphosphate. Its function is as follows. Catalyzes the attachment of isoleucine to tRNA(Ile). As IleRS can inadvertently accommodate and process structurally similar amino acids such as valine, to avoid such errors it has two additional distinct tRNA(Ile)-dependent editing activities. One activity is designated as 'pretransfer' editing and involves the hydrolysis of activated Val-AMP. The other activity is designated 'posttransfer' editing and involves deacylation of mischarged Val-tRNA(Ile). This Aeromonas salmonicida (strain A449) protein is Isoleucine--tRNA ligase.